We begin with the raw amino-acid sequence, 141 residues long: Nucleoside triphosphatase NudI (141 aa).

One can recognise a Nudix hydrolase domain in the interval Met1–Leu141. Residues Gly38–Gly59 carry the Nudix box motif.

The protein belongs to the Nudix hydrolase family. NudI subfamily. As to quaternary structure, monomer. Mg(2+) serves as cofactor.

It catalyses the reaction a ribonucleoside 5'-triphosphate + H2O = a ribonucleoside 5'-phosphate + diphosphate + H(+). The catalysed reaction is a 2'-deoxyribonucleoside 5'-triphosphate + H2O = a 2'-deoxyribonucleoside 5'-phosphate + diphosphate + H(+). It carries out the reaction dUTP + H2O = dUMP + diphosphate + H(+). The enzyme catalyses dTTP + H2O = dTMP + diphosphate + H(+). It catalyses the reaction dCTP + H2O = dCMP + diphosphate + H(+). Functionally, catalyzes the hydrolysis of nucleoside triphosphates, with a preference for pyrimidine deoxynucleoside triphosphates (dUTP, dTTP and dCTP). This chain is Nucleoside triphosphatase NudI, found in Salmonella heidelberg (strain SL476).